Reading from the N-terminus, the 387-residue chain is Short-chain dehydrogenase/reductase family 42E member 1 (387 aa).

The active-site Proton acceptor is the Tyr149. Lys153 provides a ligand contact to NAD(+). A run of 2 helical transmembrane segments spans residues 279–299 (LPIS…FVVG) and 365–385 (ILDV…LPVV).

It belongs to the 3-beta-HSD family.

It localises to the membrane. This chain is Short-chain dehydrogenase/reductase family 42E member 1 (sdr42e1), found in Danio rerio (Zebrafish).